The sequence spans 369 residues: Phospho-N-acetylmuramoyl-pentapeptide-transferase (369 aa).

10 consecutive transmembrane segments (helical) span residues 3-23, 53-73, 81-101, 118-138, 162-182, 198-218, 240-260, 267-287, 290-310, and 347-367; these read ALLG…PLFI, GGIV…LLTW, VTPS…VGFL, WQKI…AITL, FMAL…CLIV, LAAG…FWQF, PLDL…FLWW, IFMG…LAIL, TELL…SVVL, and FWII…LEWI.

It belongs to the glycosyltransferase 4 family. MraY subfamily. Mg(2+) is required as a cofactor.

Its subcellular location is the cell membrane. It carries out the reaction UDP-N-acetyl-alpha-D-muramoyl-L-alanyl-gamma-D-glutamyl-meso-2,6-diaminopimeloyl-D-alanyl-D-alanine + di-trans,octa-cis-undecaprenyl phosphate = di-trans,octa-cis-undecaprenyl diphospho-N-acetyl-alpha-D-muramoyl-L-alanyl-D-glutamyl-meso-2,6-diaminopimeloyl-D-alanyl-D-alanine + UMP. The protein operates within cell wall biogenesis; peptidoglycan biosynthesis. In terms of biological role, catalyzes the initial step of the lipid cycle reactions in the biosynthesis of the cell wall peptidoglycan: transfers peptidoglycan precursor phospho-MurNAc-pentapeptide from UDP-MurNAc-pentapeptide onto the lipid carrier undecaprenyl phosphate, yielding undecaprenyl-pyrophosphoryl-MurNAc-pentapeptide, known as lipid I. In Clavibacter sepedonicus (Clavibacter michiganensis subsp. sepedonicus), this protein is Phospho-N-acetylmuramoyl-pentapeptide-transferase.